Reading from the N-terminus, the 476-residue chain is Neuropeptide receptor 18 (476 aa).

Topologically, residues 1-61 (MSSFYNEAKF…LSNHDNSSLM (61 aa)) are extracellular. 2 N-linked (GlcNAc...) asparagine glycosylation sites follow: asparagine 43 and asparagine 57. A helical membrane pass occupies residues 62 to 82 (LIAGFYALLFMFGTCGNAAIL). Residues 83-102 (AVVHHVKGQDPRSRHNTTLT) are Cytoplasmic-facing. The helical transmembrane segment at 103-123 (YICILSIVDFLSMLPIPMTII) threads the bilayer. The Extracellular segment spans residues 124–139 (DQILGFWMFDTFACKL). Cysteine 137 and cysteine 228 are oxidised to a cystine. The helical transmembrane segment at 140–160 (FRLLEHIGKIFSTFILVAFSI) threads the bilayer. At 161 to 179 (DRYCAVCHPLQVRVRNQRT) the chain is on the cytoplasmic side. A helical membrane pass occupies residues 180-200 (VFVFLGIMFFVTCVMLSPILL). Residues 201–236 (YAHSKELVMHEKVDLDQEVITRMHLYKCVDDLGREL) are Extracellular-facing. The helical transmembrane segment at 237–257 (FVVFTLYSFVLAYLMPLLFMI) threads the bilayer. Residues 258 to 291 (YFYYEMLIRLFKQANVIKQTLVGRRSGGEEKKLT) are Cytoplasmic-facing. The chain crosses the membrane as a helical span at residues 292–312 (IPVGHIAIYTLAICSFHFICW). The Extracellular segment spans residues 313–334 (TPYWISILYSLYEELYQDTKST). The helical transmembrane segment at 335–355 (ASPPTYAFIYFMYGVHALPYI) threads the bilayer. The Cytoplasmic segment spans residues 356–476 (NSASNFILYG…ITPDTESVIL (121 aa)).

This sequence belongs to the G-protein coupled receptor 1 family. As to expression, expressed in sensory neurons including ASER.

It is found in the cell membrane. Functionally, probable receptor for neuropeptide ligand nlp-9 that plays a role in octopamine signaling and specifically, the octapamine inhibition of aversion responses in olfactory sensory neurons. In AWB olfactory sensory neurons, required for the detection of preferred food sources. This Caenorhabditis elegans protein is Neuropeptide receptor 18.